A 130-amino-acid polypeptide reads, in one-letter code: Acidic phospholipase A2 daboiatoxin B chain (130 aa).

An N-terminal signal peptide occupies residues 1–8 (MCLIGVEG). Intrachain disulfides connect Cys-34-Cys-123, Cys-36-Cys-52, Cys-51-Cys-103, Cys-57-Cys-130, Cys-58-Cys-96, Cys-65-Cys-89, and Cys-83-Cys-94. The Ca(2+) site is built by Tyr-35, Gly-37, and Gly-39. His-55 is an active-site residue. Asp-56 provides a ligand contact to Ca(2+). Asp-97 is an active-site residue.

It belongs to the phospholipase A2 family. Group II subfamily. D49 sub-subfamily. As to quaternary structure, heterodimer of an acidic protein having phospholipase A2 activity (B chain) and an A chain which weakly inhibits the B chain enzymatic activity but potentiates its lethal potency. Requires Ca(2+) as cofactor. In terms of tissue distribution, expressed by the venom gland.

It is found in the secreted. It catalyses the reaction a 1,2-diacyl-sn-glycero-3-phosphocholine + H2O = a 1-acyl-sn-glycero-3-phosphocholine + a fatty acid + H(+). Monomer: Snake venom phospholipase A2 (PLA2) that shows a high PLA2 activity (2110 umol/min/mg). In terms of biological role, heterodimer (A and B chains): snake venom phospholipase A2 that shows a moderate PLA2 activity (1377 umol/min/mg). Acts as a presynaptic neurotoxin. In vivo, induces edema and produces neurotoxic symptoms in mice. It exhibits indirect hemolysis and a strong myonecrotic activity and is cytotoxic. PLA2 catalyzes the calcium-dependent hydrolysis of the 2-acyl groups in 3-sn-phosphoglycerides. The sequence is that of Acidic phospholipase A2 daboiatoxin B chain from Daboia siamensis (Eastern Russel's viper).